The following is a 148-amino-acid chain: Lysozyme C, non-stomach isozyme (148 aa).

The N-terminal stretch at methionine 1–glycine 18 is a signal peptide. The C-type lysozyme domain occupies lysine 19–valine 148. Intrachain disulfides connect cysteine 24–cysteine 146, cysteine 48–cysteine 134, cysteine 83–cysteine 99, and cysteine 95–cysteine 113. Catalysis depends on residues glutamate 53 and aspartate 71.

It belongs to the glycosyl hydrolase 22 family. In terms of tissue distribution, expressed in blood cells.

It carries out the reaction Hydrolysis of (1-&gt;4)-beta-linkages between N-acetylmuramic acid and N-acetyl-D-glucosamine residues in a peptidoglycan and between N-acetyl-D-glucosamine residues in chitodextrins.. Its function is as follows. Lysozymes have primarily a bacteriolytic function; those in tissues and body fluids are associated with the monocyte-macrophage system and enhance the activity of immunoagents. The chain is Lysozyme C, non-stomach isozyme (LYS) from Bos taurus (Bovine).